Reading from the N-terminus, the 313-residue chain is Tyrosine recombinase slr0733 (313 aa).

The region spanning 7-101 (NNLSGLNQNI…AIKSLVNYAR (95 aa)) is the Core-binding (CB) domain. A Tyr recombinase domain is found at 122-307 (RDTTGVSPTS…RHQHQAQITD (186 aa)). Active-site residues include Arg162, Lys188, His258, Arg261, and His285. Residue Tyr294 is the O-(3'-phospho-DNA)-tyrosine intermediate of the active site.

The protein belongs to the 'phage' integrase family.

Its subcellular location is the cytoplasm. In terms of biological role, site-specific tyrosine recombinase, which acts by catalyzing the cutting and rejoining of the recombining DNA molecules. The protein is Tyrosine recombinase slr0733 of Synechocystis sp. (strain ATCC 27184 / PCC 6803 / Kazusa).